The primary structure comprises 181 residues: Adenylate kinase (181 aa).

10–15 serves as a coordination point for ATP; it reads GAGKGT. Residues 30 to 59 are NMP; it reads STGDLFRYNISNGTELGLEAKKYLDAGDLV. Residues Thr31, Arg36, 57–59, 85–88, and Gln92 each bind AMP; these read DLV and GYPR. The tract at residues 126–132 is LID; the sequence is GRGRDDD. Arg127 is a binding site for ATP. AMP is bound by residues Arg129 and Arg140. Gly166 serves as a coordination point for ATP.

It belongs to the adenylate kinase family. As to quaternary structure, monomer.

The protein localises to the cytoplasm. The enzyme catalyses AMP + ATP = 2 ADP. It participates in purine metabolism; AMP biosynthesis via salvage pathway; AMP from ADP: step 1/1. In terms of biological role, catalyzes the reversible transfer of the terminal phosphate group between ATP and AMP. Plays an important role in cellular energy homeostasis and in adenine nucleotide metabolism. The polypeptide is Adenylate kinase (Mycolicibacterium vanbaalenii (strain DSM 7251 / JCM 13017 / BCRC 16820 / KCTC 9966 / NRRL B-24157 / PYR-1) (Mycobacterium vanbaalenii)).